Here is a 107-residue protein sequence, read N- to C-terminus: uncharacterized protein (107 aa).

A disordered region spans residues 88–107; the sequence is GSTPWGSGRQVNAARPIGGR.

Its subcellular location is the virion. This is an uncharacterized protein from Acanthamoeba polyphaga (Amoeba).